The following is a 233-amino-acid chain: Beta-fibrinogenase brevinase (233 aa).

The Peptidase S1 domain maps to 1–224 (VIGGDECNIN…YIDWIQSIIA (224 aa)). 6 disulfides stabilise this stretch: C7–C138, C25–C41, C73–C231, C117–C185, C149–C164, and C175–C200. Residue H40 is the Charge relay system of the active site. N54 carries an N-linked (GlcNAc...) asparagine glycan. Catalysis depends on D85, which acts as the Charge relay system. N-linked (GlcNAc...) asparagine glycosylation is present at N129. The Cell attachment site signature appears at 176–178 (RGD). S179 acts as the Charge relay system in catalysis. N226 carries an N-linked (GlcNAc...) asparagine glycan.

Belongs to the peptidase S1 family. Snake venom subfamily. As to quaternary structure, heterodimer of the brevinase A chain and the brevinase B chain. As to expression, expressed by the venom gland.

Its subcellular location is the secreted. With respect to regulation, the fibrinolytic activity is completely inhibited by PMSF, diisopropylfluorophosphate (DFP), pefabloc, dithiothreitol (DTT) and Zn(2+), but not by Pepstatin A, E64, iodoacetate, chymostatin, tosyl-Lphenylalanine chloromethyl ketone (TPCK), soybean trypsin inhibitor (SBTI), phosphoramidon, Ca(2+), Co(2+), Cu(2+), Fe(2+), Mg(2+), Mn(2+), K(+), and Na(+). In terms of biological role, snake venom serine protease that has fibrinogenolytic activities. Preferentially cleaves the Bbeta-chain (FGB) and more slowly the Aa-chain (FGA) of fibrinogen, but does not affect the gamma-chain. Also has fibrinolytic activity. May play a role in antithrombotic reaction as well as thrombolytic reaction. The chain is Beta-fibrinogenase brevinase from Gloydius blomhoffii (Mamushi).